Reading from the N-terminus, the 150-residue chain is Macrodomain Ter protein (150 aa).

This sequence belongs to the MatP family. As to quaternary structure, homodimer.

Its subcellular location is the cytoplasm. In terms of biological role, required for spatial organization of the terminus region of the chromosome (Ter macrodomain) during the cell cycle. Prevents early segregation of duplicated Ter macrodomains during cell division. Binds specifically to matS, which is a 13 bp signature motif repeated within the Ter macrodomain. This chain is Macrodomain Ter protein, found in Citrobacter koseri (strain ATCC BAA-895 / CDC 4225-83 / SGSC4696).